The primary structure comprises 468 residues: ERO1-like protein alpha (468 aa).

A signal peptide spans 1–23 (MGHRWGFLIVFLGAVGLLGSGYG). 8 disulfides stabilise this stretch: Cys-35/Cys-48, Cys-37/Cys-46, Cys-85/Cys-391, Cys-94/Cys-99, Cys-94/Cys-131, Cys-99/Cys-104, Cys-208/Cys-241, and Cys-394/Cys-397. Residues Ser-106, Ser-143, and Ser-145 each carry the phosphoserine modification. Positions 187, 189, and 200 each coordinate FAD. FAD contacts are provided by Ser-252 and His-255. N-linked (GlcNAc...) asparagine glycosylation is present at Asn-280. Positions 287 and 300 each coordinate FAD. Asn-384 carries an N-linked (GlcNAc...) asparagine glycan.

This sequence belongs to the EROs family. In terms of assembly, predominantly monomer. May function both as a monomer and a homodimer. Interacts with PDILT. Interacts with ERP44; the interaction results in retention of ERO1A in the endoplasmic reticulum. It depends on FAD as a cofactor. The Cys-94/Cys-99 and Cys-394/Cys-397 disulfide bonds constitute the redox-active center. The Cys-94/Cys-99 disulfide bond may accept electron from P4HB and funnel them to the active site disulfide Cys-394/Cys-397. The regulatory Cys-99/Cys-104 disulfide bond stabilizes the other regulatory bond Cys-94/Cys-131. Post-translationally, phosphorylated on Ser-145 by FAM20C in the Golgi which increases its enzymatic activity. Phosphorylation is induced by lactation. It is also induced by hypoxia and reductive stress.

It is found in the endoplasmic reticulum membrane. Its subcellular location is the golgi apparatus lumen. The protein resides in the secreted. It localises to the cell projection. The protein localises to the dendrite. Enzyme activity is tightly regulated to prevent the accumulation of reactive oxygen species in the endoplasmic reticulum. Reversibly down-regulated by the formation of disulfide bonds between the active site Cys-94 and Cys-131, and between Cys-99 and Cys-104. Glutathione may be required to regulate its activity in the endoplasmic reticulum. Oxidoreductase involved in disulfide bond formation in the endoplasmic reticulum. Efficiently reoxidizes P4HB/PDI, the enzyme catalyzing protein disulfide formation, in order to allow P4HB to sustain additional rounds of disulfide formation. Following P4HB reoxidation, passes its electrons to molecular oxygen via FAD, leading to the production of reactive oxygen species (ROS) in the cell. Required for the proper folding of immunoglobulins. Plays an important role in ER stress-induced, CHOP-dependent apoptosis by activating the inositol 1,4,5-trisphosphate receptor IP3R1. The chain is ERO1-like protein alpha from Sus scrofa (Pig).